The primary structure comprises 303 residues: Phosphoribosylaminoimidazole-succinocarboxamide synthase (303 aa).

The protein belongs to the SAICAR synthetase family.

The catalysed reaction is 5-amino-1-(5-phospho-D-ribosyl)imidazole-4-carboxylate + L-aspartate + ATP = (2S)-2-[5-amino-1-(5-phospho-beta-D-ribosyl)imidazole-4-carboxamido]succinate + ADP + phosphate + 2 H(+). The protein operates within purine metabolism; IMP biosynthesis via de novo pathway; 5-amino-1-(5-phospho-D-ribosyl)imidazole-4-carboxamide from 5-amino-1-(5-phospho-D-ribosyl)imidazole-4-carboxylate: step 1/2. This chain is Phosphoribosylaminoimidazole-succinocarboxamide synthase (ADE1), found in Pichia angusta (Yeast).